Here is a 732-residue protein sequence, read N- to C-terminus: MGRKEDNIEKALKIVEHTELIRNIGIVAHIDHGKTTLSDNLIAGAGMMSEELAGKQLVLDYDEQEQARGITINAAVASMVHTFQGKEYLINLIDTPGHVDFGGDVTRAMRAVDGVIVVVDSVEGVMPQTETVIRQALREHVKPVLFINKIDRLINELRLNSDEMQKRFTKIITDVNRLISKYAPQQFTKEWQVSVQDGRVAFGSAYNNWAISIPAMAETKITFKDIVEYVKNGKQKELAQKNQLHKIILNMVIRHLPDPKTAQSYRIKQIWKGDLDSEIGKAMINCDYKGPVAMMVTKIIIDPHAGEIAIGRLFSGTVKKGTDLYISGAGKGKVQTLAMMVGPDRIPVDEITAGNIAAIVGLKGAIAGATVSSLENMVPFEPMIHYSEPVVTLAIEAKHTADLPRLIEVLRDISKADPSIQVDINQETGEHLISGMGELHLDVTLYRIKNDYKVEVETSDPIVVYRETVEKKGGPFEGKSPNKHNRFYFEVEPLKPEVIQAIEDGDIPQGSKFKDKKALVELLVSKGIDRDEAKGLVCVEGTNMMFDVTRGIQYLDETMELLIEAFVEVMNRGPLANEKVFGVKARLVDAKLHEDSIHRGPAQVIPAGRNSIYGAMCEAKRVLLEPVQRVFINVPQEEMGAAINEIQQRRGIIEDMKQEGDEISLTAKVPVAGMFGFASAIRGATGGKVLWSFENAGYQKVPPELQDSIVRSIRERKGLRQEPYDADYYASM.

The 210-residue stretch at 19–228 (ELIRNIGIVA…TKITFKDIVE (210 aa)) folds into the tr-type G domain. Residues 28–35 (AHIDHGKT), 94–98 (DTPGH), and 148–151 (NKID) contribute to the GTP site. His598 bears the Diphthamide mark.

The protein belongs to the TRAFAC class translation factor GTPase superfamily. Classic translation factor GTPase family. EF-G/EF-2 subfamily.

The protein localises to the cytoplasm. Its function is as follows. Catalyzes the GTP-dependent ribosomal translocation step during translation elongation. During this step, the ribosome changes from the pre-translocational (PRE) to the post-translocational (POST) state as the newly formed A-site-bound peptidyl-tRNA and P-site-bound deacylated tRNA move to the P and E sites, respectively. Catalyzes the coordinated movement of the two tRNA molecules, the mRNA and conformational changes in the ribosome. The chain is Elongation factor 2 (fusA) from Thermoplasma acidophilum (strain ATCC 25905 / DSM 1728 / JCM 9062 / NBRC 15155 / AMRC-C165).